A 96-amino-acid polypeptide reads, in one-letter code: Cystatin (96 aa).

Residues 22–65 (DFIKAALNETGTHAGRKYKVLRSSQQVVAGMKYTFYIVFEDDES) form the Cystatin domain. N-linked (GlcNAc...) asparagine glycosylation occurs at Asn-29.

This sequence belongs to the cystatin family. As to quaternary structure, interacts with cathepsin L-like peptidase; the interaction results in inhibition of cathepsin L-like peptidase activity. Salivary gland. Midgut.

Cysteine proteinase inhibitor. Inhibits cathepsin L-like peptidase. Increases cell viability following apoptosis induction by staurosporine. Inhibits human cathepsin S (CTSS), human cathepsin L2 (CTSV), human cathepsin L (CTSL), human cathepsin B (CTSB) and papain. Functionally, (Microbial infection) Modulates dengue virus type 2 replication in salivary glands. The polypeptide is Cystatin (Aedes aegypti (Yellowfever mosquito)).